The sequence spans 311 residues: Ornithine carbamoyltransferase (311 aa).

Carbamoyl phosphate-binding positions include 56-59 (STRT), Gln-83, Arg-107, and 134-137 (HPTQ). L-ornithine is bound by residues Asn-166, Asp-230, and 234–235 (SM). Residues 270 to 271 (CL) and Lys-298 contribute to the carbamoyl phosphate site.

This sequence belongs to the aspartate/ornithine carbamoyltransferase superfamily. OTCase family.

The protein resides in the cytoplasm. It catalyses the reaction carbamoyl phosphate + L-ornithine = L-citrulline + phosphate + H(+). It functions in the pathway amino-acid degradation; L-arginine degradation via ADI pathway; carbamoyl phosphate from L-arginine: step 2/2. Its function is as follows. Reversibly catalyzes the transfer of the carbamoyl group from carbamoyl phosphate (CP) to the N(epsilon) atom of ornithine (ORN) to produce L-citrulline. The sequence is that of Ornithine carbamoyltransferase from Ignicoccus hospitalis (strain KIN4/I / DSM 18386 / JCM 14125).